Consider the following 98-residue polypeptide: NADH-ubiquinone oxidoreductase chain 4L (98 aa).

3 consecutive transmembrane segments (helical) span residues 1-21 (MSLT…GLLL), 29-49 (SLLC…MIIL), and 61-81 (IILL…LVMV).

It belongs to the complex I subunit 4L family. As to quaternary structure, core subunit of respiratory chain NADH dehydrogenase (Complex I) which is composed of 45 different subunits.

Its subcellular location is the mitochondrion inner membrane. The enzyme catalyses a ubiquinone + NADH + 5 H(+)(in) = a ubiquinol + NAD(+) + 4 H(+)(out). In terms of biological role, core subunit of the mitochondrial membrane respiratory chain NADH dehydrogenase (Complex I) which catalyzes electron transfer from NADH through the respiratory chain, using ubiquinone as an electron acceptor. Part of the enzyme membrane arm which is embedded in the lipid bilayer and involved in proton translocation. The sequence is that of NADH-ubiquinone oxidoreductase chain 4L (MT-ND4L) from Platyrrhinus brachycephalus (Short-headed broad-nosed bat).